Reading from the N-terminus, the 805-residue chain is Phenylalanine--tRNA ligase beta subunit (805 aa).

The tRNA-binding domain maps to 39–148 (APPFTGVVVA…AALRPGTDIR (110 aa)). The B5 domain occupies 399 to 474 (PVREPVRMRL…RVYGFERIPD (76 aa)). 4 residues coordinate Mg(2+): Asp-452, Asp-458, Glu-461, and Glu-462. The FDX-ACB domain maps to 703 to 804 (SRQPAVVRDL…LVAAHNARQR (102 aa)).

Belongs to the phenylalanyl-tRNA synthetase beta subunit family. Type 1 subfamily. As to quaternary structure, tetramer of two alpha and two beta subunits. The cofactor is Mg(2+).

It localises to the cytoplasm. The enzyme catalyses tRNA(Phe) + L-phenylalanine + ATP = L-phenylalanyl-tRNA(Phe) + AMP + diphosphate + H(+). The chain is Phenylalanine--tRNA ligase beta subunit from Bordetella bronchiseptica (strain ATCC BAA-588 / NCTC 13252 / RB50) (Alcaligenes bronchisepticus).